A 251-amino-acid polypeptide reads, in one-letter code: MAQESGINALGQFQLTTGFGAFGKAIEFTNSNEMMLLAAVIVTSLFVVALRQRALVPGRMQGLAEISYEFVHNMVLDTIGEEGKRFFPFVFTLFAFILIGNILGLFPYFFAFTSHIAITGALALFVFALSTLVGFWYHGIGFLKFFSPPGVPGWLLPLLIPIEIVSFLSRPISLSVRLFANITAGHVMWEVFAGFMLMLVSGLGAVGVVAAIIPLGLNIALTALEFLVAFLQAYVFAILTCLYLHDAIHMH.

The next 6 membrane-spanning stretches (helical) occupy residues 30-50, 86-106, 116-136, 145-165, 195-215, and 219-239; these read NSNEMMLLAAVIVTSLFVVAL, FFPFVFTLFAFILIGNILGLF, IAITGALALFVFALSTLVGFW, FFSPPGVPGWLLPLLIPIEIV, FMLMLVSGLGAVGVVAAIIPL, and IALTALEFLVAFLQAYVFAIL.

Belongs to the ATPase A chain family. As to quaternary structure, F-type ATPases have 2 components, CF(1) - the catalytic core - and CF(0) - the membrane proton channel. CF(1) has five subunits: alpha(3), beta(3), gamma(1), delta(1), epsilon(1). CF(0) has three main subunits: a(1), b(2) and c(9-12). The alpha and beta chains form an alternating ring which encloses part of the gamma chain. CF(1) is attached to CF(0) by a central stalk formed by the gamma and epsilon chains, while a peripheral stalk is formed by the delta and b chains.

It localises to the cell inner membrane. Its function is as follows. Key component of the proton channel; it plays a direct role in the translocation of protons across the membrane. The protein is ATP synthase subunit a of Acidiphilium cryptum (strain JF-5).